The chain runs to 185 residues: GTP cyclohydrolase 1 (185 aa).

The Zn(2+) site is built by Cys75, His78, and Cys146.

This sequence belongs to the GTP cyclohydrolase I family. As to quaternary structure, homomer.

It catalyses the reaction GTP + H2O = 7,8-dihydroneopterin 3'-triphosphate + formate + H(+). The protein operates within cofactor biosynthesis; 7,8-dihydroneopterin triphosphate biosynthesis; 7,8-dihydroneopterin triphosphate from GTP: step 1/1. The polypeptide is GTP cyclohydrolase 1 (Clostridium kluyveri (strain NBRC 12016)).